The following is a 105-amino-acid chain: Small ribosomal subunit protein bS20 (105 aa).

It belongs to the bacterial ribosomal protein bS20 family.

Binds directly to 16S ribosomal RNA. The protein is Small ribosomal subunit protein bS20 of Moorella thermoacetica (strain ATCC 39073 / JCM 9320).